The chain runs to 419 residues: UDP-N-acetylglucosamine 1-carboxyvinyltransferase (419 aa).

Phosphoenolpyruvate is bound at residue 22-23 (KN). R95 contributes to the UDP-N-acetyl-alpha-D-glucosamine binding site. C119 functions as the Proton donor in the catalytic mechanism. A 2-(S-cysteinyl)pyruvic acid O-phosphothioketal modification is found at C119. UDP-N-acetyl-alpha-D-glucosamine contacts are provided by residues 164–167 (KVSV), D308, and I330.

Belongs to the EPSP synthase family. MurA subfamily.

The protein localises to the cytoplasm. It catalyses the reaction phosphoenolpyruvate + UDP-N-acetyl-alpha-D-glucosamine = UDP-N-acetyl-3-O-(1-carboxyvinyl)-alpha-D-glucosamine + phosphate. Its pathway is cell wall biogenesis; peptidoglycan biosynthesis. Its function is as follows. Cell wall formation. Adds enolpyruvyl to UDP-N-acetylglucosamine. The chain is UDP-N-acetylglucosamine 1-carboxyvinyltransferase from Rickettsia felis (strain ATCC VR-1525 / URRWXCal2) (Rickettsia azadi).